Consider the following 236-residue polypeptide: 15,16-dihydrobiliverdin:ferredoxin oxidoreductase (236 aa).

It belongs to the HY2 family.

The enzyme catalyses 15,16-dihydrobiliverdin + oxidized 2[4Fe-4S]-[ferredoxin] = biliverdin IXalpha + reduced 2[4Fe-4S]-[ferredoxin] + 2 H(+). Catalyzes the two-electron reduction of biliverdin IX-alpha at the C15 methine bridge. The polypeptide is 15,16-dihydrobiliverdin:ferredoxin oxidoreductase (Prochlorococcus marinus (strain AS9601)).